The sequence spans 941 residues: Pre-mRNA-processing factor 6 (941 aa).

The segment at 1–79 (MNKKKKPFLG…DEDLNDTNYD (79 aa)) is disordered. Positions 39 to 65 (DANDPVDDRHAPPGKRTVGDQMKKNQA) are enriched in basic and acidic residues. Residues 66–78 (ADDDDEDLNDTNY) show a composition bias toward acidic residues. S143 is subject to Phosphoserine. A phosphothreonine mark is found at T180, T266, and T275. Position 279 is a phosphoserine (S279). 9 HAT repeats span residues 384-416 (TDIRAKKRVLRKALEHVPNSVRLWKAAVELEEP), 418-444 (DARIMLSRAVECCPTSVELWLALARLE), 445-476 (TYENARKVLNKARENIPTDRHIWITAAKLEEA), 554-586 (NALECARAIYAYALQVFPSKKSVWLRAAYFGKN), 588-620 (GTRESLEALLQRAVAHCPKAEVLWLMGAKSKWL), 622-654 (GDVPAARSILALAFQANPNSEEIWLAAVKLESE), 689-721 (DNIRAAQDLCEEALRHYEDFPKLWMMKGQIEEQ), 723-755 (EMMEKAREAYNQGLKKCPHSTPLWLLLSRLEEK), and 855-887 (RKITKAREWFHRTVKIDSDLGDAWAFFYKFELQ).

Identified in the spliceosome B complex. Identified in the spliceosome C complex. Associates with the U5 snRNP particle. Component of the U4/U6-U5 tri-snRNP complex composed of the U4, U6 and U5 snRNAs and at least PRPF3, PRPF4, PRPF6, PRPF8, PRPF31, SNRNP200, TXNL4A, SNRNP40, DDX23, CD2BP2, PPIH, SNU13, EFTUD2, SART1 and USP39, LSm proteins LSm2-8 and Sm proteins. Interacts with ARAF1. Interacts with AR and NR3C1, but not ESR1, independently of the presence of hormones. Interacts with USH1G. Phosphorylated by PRP4K during spliceosome assembly.

It localises to the nucleus. The protein localises to the nucleoplasm. Its subcellular location is the nucleus speckle. Its function is as follows. Involved in pre-mRNA splicing as component of the U4/U6-U5 tri-snRNP complex, one of the building blocks of the spliceosome. Enhances dihydrotestosterone-induced transactivation activity of AR, as well as dexamethasone-induced transactivation activity of NR3C1, but does not affect estrogen-induced transactivation. This is Pre-mRNA-processing factor 6 (PRPF6) from Pongo abelii (Sumatran orangutan).